Here is a 439-residue protein sequence, read N- to C-terminus: Mitochondrial distribution and morphology protein 12 (439 aa).

In terms of domain architecture, SMP-LTD spans 1–439; the sequence is MSIDINWDTI…VYPSFWTFLV (439 aa). Disordered stretches follow at residues 65–165 and 229–284; these read PLPD…PGAL and LTLT…HEKS. The segment covering 69-90 has biased composition (acidic residues); it reads FYEDDEDYPDEEGDEAENEAED. The span at 109 to 121 shows a compositional bias: basic and acidic residues; that stretch reads PSRDSQSRERGRG. Residues 229 to 243 are compositionally biased toward polar residues; the sequence is LTLTPQSHPDPTSRP.

The protein belongs to the MDM12 family. As to quaternary structure, component of the ER-mitochondria encounter structure (ERMES) or MDM complex, composed of MMM1, MDM10, mdm12 and MDM34. An MMM1 homodimer associates with one molecule of mdm12 on each side in a pairwise head-to-tail manner, and the SMP-LTD domains of MMM1 and mdm12 generate a continuous hydrophobic tunnel for phospholipid trafficking.

Its subcellular location is the mitochondrion outer membrane. It localises to the endoplasmic reticulum membrane. In terms of biological role, component of the ERMES/MDM complex, which serves as a molecular tether to connect the endoplasmic reticulum (ER) and mitochondria. Components of this complex are involved in the control of mitochondrial shape and protein biogenesis, and function in nonvesicular lipid trafficking between the ER and mitochondria. mdm12 is required for the interaction of the ER-resident membrane protein MMM1 and the outer mitochondrial membrane-resident beta-barrel protein MDM10. The mdm12-MMM1 subcomplex functions in the major beta-barrel assembly pathway that is responsible for biogenesis of all mitochondrial outer membrane beta-barrel proteins, and acts in a late step after the SAM complex. The MDM10-mdm12-MMM1 subcomplex further acts in the TOM40-specific pathway after the action of the mdm12-MMM1 complex. Essential for establishing and maintaining the structure of mitochondria and maintenance of mtDNA nucleoids. The chain is Mitochondrial distribution and morphology protein 12 from Pyrenophora tritici-repentis (strain Pt-1C-BFP) (Wheat tan spot fungus).